The primary structure comprises 86 residues: Small ribosomal subunit protein bS20 (86 aa).

Positions 1–27 are disordered; sequence MANSKSAKKRAIQAEKRRQHNASRRSM.

This sequence belongs to the bacterial ribosomal protein bS20 family.

Functionally, binds directly to 16S ribosomal RNA. The sequence is that of Small ribosomal subunit protein bS20 from Vibrio atlanticus (strain LGP32) (Vibrio splendidus (strain Mel32)).